Consider the following 456-residue polypeptide: Bifunctional protein GlmU (456 aa).

The tract at residues 1 to 229 is pyrophosphorylase; it reads MLNSAMSVVI…LSEVEGVNNR (229 aa). UDP-N-acetyl-alpha-D-glucosamine is bound by residues 11–14, lysine 25, glutamine 76, 81–82, 103–105, glycine 140, glutamate 154, asparagine 169, and asparagine 227; these read LAAG, GT, and YGD. Mg(2+) is bound at residue aspartate 105. Asparagine 227 serves as a coordination point for Mg(2+). Positions 230–250 are linker; it reads LQLSRLERVYQSEQAEKLLLA. The interval 251-456 is N-acetyltransferase; that stretch reads GVMLRDPARF…QGWQRPAKKK (206 aa). Residues arginine 333 and lysine 351 each coordinate UDP-N-acetyl-alpha-D-glucosamine. Catalysis depends on histidine 363, which acts as the Proton acceptor. Residues tyrosine 366 and asparagine 377 each contribute to the UDP-N-acetyl-alpha-D-glucosamine site. Acetyl-CoA is bound by residues alanine 380, 386-387, serine 405, alanine 423, and arginine 440; that span reads NY.

The protein in the N-terminal section; belongs to the N-acetylglucosamine-1-phosphate uridyltransferase family. This sequence in the C-terminal section; belongs to the transferase hexapeptide repeat family. In terms of assembly, homotrimer. It depends on Mg(2+) as a cofactor.

Its subcellular location is the cytoplasm. It catalyses the reaction alpha-D-glucosamine 1-phosphate + acetyl-CoA = N-acetyl-alpha-D-glucosamine 1-phosphate + CoA + H(+). The enzyme catalyses N-acetyl-alpha-D-glucosamine 1-phosphate + UTP + H(+) = UDP-N-acetyl-alpha-D-glucosamine + diphosphate. It participates in nucleotide-sugar biosynthesis; UDP-N-acetyl-alpha-D-glucosamine biosynthesis; N-acetyl-alpha-D-glucosamine 1-phosphate from alpha-D-glucosamine 6-phosphate (route II): step 2/2. Its pathway is nucleotide-sugar biosynthesis; UDP-N-acetyl-alpha-D-glucosamine biosynthesis; UDP-N-acetyl-alpha-D-glucosamine from N-acetyl-alpha-D-glucosamine 1-phosphate: step 1/1. The protein operates within bacterial outer membrane biogenesis; LPS lipid A biosynthesis. In terms of biological role, catalyzes the last two sequential reactions in the de novo biosynthetic pathway for UDP-N-acetylglucosamine (UDP-GlcNAc). The C-terminal domain catalyzes the transfer of acetyl group from acetyl coenzyme A to glucosamine-1-phosphate (GlcN-1-P) to produce N-acetylglucosamine-1-phosphate (GlcNAc-1-P), which is converted into UDP-GlcNAc by the transfer of uridine 5-monophosphate (from uridine 5-triphosphate), a reaction catalyzed by the N-terminal domain. The protein is Bifunctional protein GlmU of Citrobacter koseri (strain ATCC BAA-895 / CDC 4225-83 / SGSC4696).